The chain runs to 340 residues: Tartrate-resistant acid phosphatase type 5 (340 aa).

The N-terminal stretch at 1-20 is a signal peptide; that stretch reads MDTWTVLLILQASLVLPGAV. Positions 41, 79, 82, and 118 each coordinate Fe cation. Residues N124 and N155 are each glycosylated (N-linked (GlcNAc...) asparagine). C169 and C227 are joined by a disulfide. 3 residues coordinate Fe cation: H213, H248, and H250.

Fe cation is required as a cofactor.

It is found in the secreted. It carries out the reaction a phosphate monoester + H2O = an alcohol + phosphate. Uteroferrin is a phosphoprotein phosphatase, synthesized in response to progesterone. It appears to function in transplacental transport of iron in pig. The polypeptide is Tartrate-resistant acid phosphatase type 5 (ACP5) (Sus scrofa (Pig)).